Here is a 318-residue protein sequence, read N- to C-terminus: Porphobilinogen deaminase (318 aa).

Position 245 is an S-(dipyrrolylmethanemethyl)cysteine (Cys245).

It belongs to the HMBS family. Monomer. Dipyrromethane is required as a cofactor.

The catalysed reaction is 4 porphobilinogen + H2O = hydroxymethylbilane + 4 NH4(+). The protein operates within porphyrin-containing compound metabolism; protoporphyrin-IX biosynthesis; coproporphyrinogen-III from 5-aminolevulinate: step 2/4. Its pathway is porphyrin-containing compound metabolism; chlorophyll biosynthesis. In terms of biological role, tetrapolymerization of the monopyrrole PBG into the hydroxymethylbilane pre-uroporphyrinogen in several discrete steps. This is Porphobilinogen deaminase from Prochlorococcus marinus (strain MIT 9215).